Consider the following 479-residue polypeptide: POU domain, class 2, transcription factor 2 (479 aa).

Disordered stretches follow at residues 1-86, 166-200, 275-298, 357-393, and 409-479; these read MVHS…AQPH, TQAVTRPTLPDPHLSHPQPPKCLEPPSHPEEPSDL, SSLPSPNQLSSPSLGFDGLPGRRR, PCSAAPMLPSPGKPASYSPHMVTPQGGAGTLPLSQAS, and TLHP…PYQP. The span at 12 to 37 shows a compositional bias: basic and acidic residues; the sequence is RMSKPLEAEKQGLDSPSEHTDTERNG. Over residues 38 to 60 the composition is skewed to polar residues; the sequence is PDTNHQNPQNKTSPFSVSPTGPS. Residues 76–85 show a composition bias toward pro residues; sequence APLPPQPAQP. The POU-specific domain occupies 195–269; sequence EEPSDLEELE…LLEKWLNDAE (75 aa). The segment covering 275-288 has biased composition (low complexity); that stretch reads SSLPSPNQLSSPSL. Residues 297-356 constitute a DNA-binding region (homeobox); the sequence is RRKKRTSIETNVRFALEKSFLANQKPTSEEILLIAEQLHMEKEVIRVWFCNRRQKEKRIN. Residues 389 to 410 are leucine-zipper; it reads LSQASSSLSTTVTTLSSAVGTL. The segment covering 416–425 has biased composition (gly residues); sequence AGGGGGGGGA.

This sequence belongs to the POU transcription factor family. Class-2 subfamily. As to quaternary structure, interacts with NR3C1, AR and PGR. Interacts with POU2AF1; the interaction increases POU2F2 transactivation activity. Isoform 3 is B-cell specific. Isoform 5 is expressed in B-cells and the immunoglobulin-expressing T-cell line MOLT-4, but not in the T-cell line BW5147.

It is found in the cytoplasm. The protein resides in the nucleus. Transactivation activity is enhanced by transcriptional coactivator POU2AF1. Transcription factor that specifically binds to the octamer motif (5'-ATTTGCAT-3'). Regulates IL6 expression in B cells with POU2AF1. Regulates transcription in a number of tissues in addition to activating immunoglobulin gene expression. Modulates transcription transactivation by NR3C1, AR and PGR. Its function is as follows. Activates the U2 small nuclear RNA (snRNA) promoter. In Homo sapiens (Human), this protein is POU domain, class 2, transcription factor 2.